Reading from the N-terminus, the 680-residue chain is DNA-directed RNA polymerase subunit beta' (680 aa).

Positions 69, 71, 87, and 90 each coordinate Zn(2+). 3 residues coordinate Mg(2+): Asp-489, Asp-491, and Asp-493.

This sequence belongs to the RNA polymerase beta' chain family. RpoC1 subfamily. In terms of assembly, in plastids the minimal PEP RNA polymerase catalytic core is composed of four subunits: alpha, beta, beta', and beta''. When a (nuclear-encoded) sigma factor is associated with the core the holoenzyme is formed, which can initiate transcription. The cofactor is Mg(2+). Zn(2+) is required as a cofactor.

Its subcellular location is the plastid. It localises to the chloroplast. The catalysed reaction is RNA(n) + a ribonucleoside 5'-triphosphate = RNA(n+1) + diphosphate. Functionally, DNA-dependent RNA polymerase catalyzes the transcription of DNA into RNA using the four ribonucleoside triphosphates as substrates. The polypeptide is DNA-directed RNA polymerase subunit beta' (Aethionema cordifolium (Lebanon stonecress)).